Here is a 436-residue protein sequence, read N- to C-terminus: Antilisterial bacteriocin subtilosin biosynthesis protein AlbD (436 aa).

Helical transmembrane passes span 27–47 (IAAG…QAGI), 51–71 (VLGK…MVFL), 112–132 (TLFF…SGAQ), 134–154 (LFWL…GVML), 166–186 (FLLH…MPAV), 187–207 (TIPL…PVFL), 240–260 (AMLL…FQMM), 270–290 (IYIV…LYSI), 315–335 (FYSG…GFIS), and 395–415 (ATLA…LIIV).

The protein localises to the cell membrane. Its function is as follows. Involved in the production of the bacteriocin subtilosin. Required for immunity to subtilosin. In Bacillus subtilis, this protein is Antilisterial bacteriocin subtilosin biosynthesis protein AlbD (albD).